We begin with the raw amino-acid sequence, 238 residues long: Lactate utilization protein A (238 aa).

This sequence belongs to the LutA/YkgE family.

Is involved in L-lactate degradation and allows cells to grow with lactate as the sole carbon source. In Anoxybacillus flavithermus (strain DSM 21510 / WK1), this protein is Lactate utilization protein A.